The sequence spans 277 residues: Phosphoenolpyruvate synthase regulatory protein (277 aa).

157 to 164 (GVSRCGKT) is a binding site for ADP.

It belongs to the pyruvate, phosphate/water dikinase regulatory protein family. PSRP subfamily.

It catalyses the reaction [pyruvate, water dikinase] + ADP = [pyruvate, water dikinase]-phosphate + AMP + H(+). It carries out the reaction [pyruvate, water dikinase]-phosphate + phosphate + H(+) = [pyruvate, water dikinase] + diphosphate. In terms of biological role, bifunctional serine/threonine kinase and phosphorylase involved in the regulation of the phosphoenolpyruvate synthase (PEPS) by catalyzing its phosphorylation/dephosphorylation. The chain is Phosphoenolpyruvate synthase regulatory protein from Escherichia coli O17:K52:H18 (strain UMN026 / ExPEC).